The primary structure comprises 230 residues: Ureidoacrylate amidohydrolase RutB (230 aa).

D24 serves as the catalytic Proton acceptor. The active site involves K133. The active-site Nucleophile is the C166.

The protein belongs to the isochorismatase family. RutB subfamily.

The catalysed reaction is (Z)-3-ureidoacrylate + H2O + H(+) = (Z)-3-aminoacrylate + NH4(+) + CO2. It catalyses the reaction (Z)-3-ureidoacrylate + H2O = (Z)-3-aminoacrylate + carbamate + H(+). The enzyme catalyses (Z)-2-methylureidoacrylate + H2O + H(+) = (Z)-2-methylaminoacrylate + NH4(+) + CO2. Functionally, hydrolyzes ureidoacrylate to form aminoacrylate and carbamate. The carbamate hydrolyzes spontaneously, thereby releasing one of the nitrogen atoms of the pyrimidine ring as ammonia and one of its carbon atoms as CO2. This is Ureidoacrylate amidohydrolase RutB from Escherichia coli (strain B / BL21-DE3).